A 597-amino-acid polypeptide reads, in one-letter code: MAEIIQERIEDRIPELEQLERIGLFSHAEIKAIIKKASDLEYKIHRRTLLKEDFINYVQYEINLLELIQRRRARIKYSFKKDEIEYSMVHRVQGVFGRASAKWKDDVQLWLSYIVFCKKWGTKTHLSKIFSAMLAIHSNKPALWIMAAKWEMEDRLSSESARQLFLRALRFHPECPKLYQEYFRMELMHAEKLRKEKQEFEKAAMDMGDFDHPEEILKGELARIIYKNSISKIKGAEFHVSLLAIAQLFDFAKDLQKEIYDDLQALHTDDPLTWDYVARRELEIESQPGEEQPVSKQAKAVEMGRREERCCAVYEEAVKALPTEAMWKCYITFCLERFSKKTSSVPLRGQRLERTMLAFRKAHELKLLSEVQYKQWIDLLLRQDLFKEALQVAEAGTELFKDSVTMWQTKLQVLIDSKSPDVEMRFEEAFAHLKPQVCLPLWISWAEWSESAKSQEDTEAIFKKAIIAVTGASSVTLKEKYLDWAYRSGGYKKARAVFKSLQESRPFSVEFFRKMMQFEKEQEPCKMVNLREYYERALREFGTSDSDLWMDYIKEELNHPFGKPENCGQIYWRAMKMLQGQSAELFVAKHAMHQAGH.

HAT repeat units follow at residues 121–153 (GTKT…WEME), 156–188 (LSSE…MELM), 304–335 (GRRE…TFCL), 488–520 (SGGY…QFEK), and 524–557 (PCKM…KEEL).

It belongs to the UTP6 family. Part of the small subunit (SSU) processome, composed of more than 70 proteins and the RNA chaperone small nucleolar RNA (snoRNA) U3.

Its subcellular location is the nucleus. The protein localises to the nucleolus. Functionally, part of the small subunit (SSU) processome, first precursor of the small eukaryotic ribosomal subunit. During the assembly of the SSU processome in the nucleolus, many ribosome biogenesis factors, an RNA chaperone and ribosomal proteins associate with the nascent pre-rRNA and work in concert to generate RNA folding, modifications, rearrangements and cleavage as well as targeted degradation of pre-ribosomal RNA by the RNA exosome. Involved in nucleolar processing of pre-18S ribosomal RNA. This chain is U3 small nucleolar RNA-associated protein 6 homolog (Utp6), found in Mus musculus (Mouse).